The sequence spans 280 residues: F420-dependent methylenetetrahydromethanopterin dehydrogenase (280 aa).

The protein belongs to the MTD family.

It carries out the reaction 5,10-methylenetetrahydromethanopterin + oxidized coenzyme F420-(gamma-L-Glu)(n) + 2 H(+) = 5,10-methenyl-5,6,7,8-tetrahydromethanopterin + reduced coenzyme F420-(gamma-L-Glu)(n). It functions in the pathway one-carbon metabolism; methanogenesis from CO(2); 5,10-methylene-5,6,7,8-tetrahydromethanopterin from 5,10-methenyl-5,6,7,8-tetrahydromethanopterin (coenzyme F420 route): step 1/1. Its function is as follows. Catalyzes the reversible reduction of methenyl-H(4)MPT(+) to methylene-H(4)MPT. The polypeptide is F420-dependent methylenetetrahydromethanopterin dehydrogenase (Methanosphaerula palustris (strain ATCC BAA-1556 / DSM 19958 / E1-9c)).